A 132-amino-acid polypeptide reads, in one-letter code: 3'-dehydrocarminate deglycosidase beta subunit (132 aa).

It belongs to the C-glycoside deglycosidase beta subunit family. In terms of assembly, heterodimer composed of an alpha subunit (CarB) and a beta subunit (CarC). Mg(2+) serves as cofactor.

It catalyses the reaction 3'-dehydrocarminate + H(+) = kermesate + 1,5-anhydro-D-erythro-hex-1-en-3-ulose. Its activity is regulated as follows. Activity is strongly reduced in the presence of chelating agents. Carbon-carbon bond-cleaving enzyme which participates in a carminate degradation pathway. Cleaves the C-C bond in 3'-dehydrocarminate to form kermesate. Also shows weak activity with other C-glycosides, such as 3''-dehydropuerarin (3''-oxo-puerarin), 3''-dehydroisoorientin (3''-oxo-homoorientin) and 3'-dehydromangiferin (3'-oxo-mangiferin). This Microbacterium sp protein is 3'-dehydrocarminate deglycosidase beta subunit.